The sequence spans 466 residues: Ankyrin repeat and SOCS box protein 18 (466 aa).

ANK repeat units follow at residues 119-148, 151-180, 184-213, 218-247, 251-288, and 292-321; these read ELTT…DPDA, GGRG…DPDL, EGLA…SVQR, GRDT…HVDA, RGET…EADA, and DERS…DAGA. Residues 405 to 463 enclose the SOCS box domain; that stretch reads QMHKPFYQSLFALALTPRCLQHLCRCALRRLFGKRCFDLIPLLPLPKPLQNYLLLEPQG.

This sequence belongs to the ankyrin SOCS box (ASB) family.

The protein operates within protein modification; protein ubiquitination. Its function is as follows. May be a substrate-recognition component of a SCF-like ECS (Elongin-Cullin-SOCS-box protein) E3 ubiquitin-protein ligase complex which mediates the ubiquitination and subsequent proteasomal degradation of target proteins. In Homo sapiens (Human), this protein is Ankyrin repeat and SOCS box protein 18 (ASB18).